The primary structure comprises 135 residues: Large ribosomal subunit protein eL32 (135 aa).

Lysine 9 participates in a covalent cross-link: Glycyl lysine isopeptide (Lys-Gly) (interchain with G-Cter in SUMO2). N6-succinyllysine is present on lysine 50. Serine 62 carries the phosphoserine modification.

It belongs to the eukaryotic ribosomal protein eL32 family. Component of the large ribosomal subunit.

The protein resides in the cytoplasm. Component of the large ribosomal subunit. The ribosome is a large ribonucleoprotein complex responsible for the synthesis of proteins in the cell. This is Large ribosomal subunit protein eL32 (RPL32) from Macaca fascicularis (Crab-eating macaque).